Consider the following 374-residue polypeptide: Pulmonary surfactant-associated protein D (374 aa).

Residues 1–19 (MLHFLSMLVLLVQPLGDLG) form the signal peptide. Residues cysteine 34 and cysteine 39 each carry the S-nitrosocysteine modification. A disordered region spans residues 40–221 (SPTENGLPGR…RGIKGESGLP (182 aa)). The 177-residue stretch at 45–221 (GLPGRDGRDG…RGIKGESGLP (177 aa)) folds into the Collagen-like domain. A compositionally biased stretch (basic and acidic residues) spans 49 to 64 (RDGRDGREGPRGEKGD). Residue proline 77 is modified to Hydroxyproline. A 5-hydroxylysine modification is found at lysine 86. The N-linked (GlcNAc...) asparagine glycan is linked to asparagine 89. Proline 95 carries the hydroxyproline modification. Lysine 98 is modified (5-hydroxylysine). Serine 109 bears the Phosphoserine mark. Composition is skewed to low complexity over residues 137 to 163 (KGEA…PAGP) and 170 to 200 (PGEQ…RGPP). A hydroxyproline mark is found at proline 170 and proline 176. Over residues 203–215 (KGDRGAPGDRGIK) the composition is skewed to basic and acidic residues. Residues 222 to 253 (DSAALRQQMEALNGKLQRLEAAFSRYKKAALF) are a coiled coil. The C-type lectin domain maps to 259–374 (VGDKIFRAAN…GEQRLVICEF (116 aa)). 2 cysteine pairs are disulfide-bonded: cysteine 280/cysteine 372 and cysteine 350/cysteine 364.

This sequence belongs to the SFTPD family. Oligomeric complex of 4 set of homotrimers. Post-translationally, S-nitrosylation at Cys-34 and Cys-39 alters the quaternary structure which results in a pro-inflammatory chemoattractive signaling activity with macrophages.

The protein resides in the secreted. It localises to the extracellular space. The protein localises to the extracellular matrix. Its subcellular location is the surface film. Contributes to the lung's defense against inhaled microorganisms, organic antigens and toxins. Interacts with compounds such as bacterial lipopolysaccharides, oligosaccharides and fatty acids and modulates leukocyte action in immune response. May participate in the extracellular reorganization or turnover of pulmonary surfactant. Binds strongly maltose residues and to a lesser extent other alpha-glucosyl moieties. The protein is Pulmonary surfactant-associated protein D (Sftpd) of Rattus norvegicus (Rat).